Reading from the N-terminus, the 354-residue chain is MTIFNGLSESGESKKLNSKIEKQIENASKKDKKIYKVLLLGASDSGKSTISKQIKILNKNGFSQEEIMTFIPVIRRNLLESAKTLVKIIVQKGINLDPLGTHNCEIIEKFNPTPGELINANIGQAITSLWSANSVRSCTYGNDSVLIDSAPYFFSRADEICSRHYVPTIDDILRSRNSTLGISEISFTLDHLQIRMFDVGGQRTERRKWIYCFENVNSIIFCVSLNDYDKKLYERAAPERNRLVESISLFDSIINSQWFMHSSIILFLNKFDLFRKKLEHVPFQDYFPQYEGKNSVKSITRYILWLFVNPSINRAKHNIYPHITTAVDTSNIKVVFSAVKETILQHSLKEAGMF.

The 322-residue stretch at 33-354 folds into the G-alpha domain; that stretch reads KIYKVLLLGA…QHSLKEAGMF (322 aa). The tract at residues 36–49 is G1 motif; the sequence is KVLLLGASDSGKST. GTP contacts are provided by Asp-44, Ser-45, Gly-46, Lys-47, Ser-48, Thr-49, Asp-148, Leu-173, Thr-179, Gly-201, Asn-269, Lys-270, Asp-272, and Ala-326. Residue Ser-48 participates in Mg(2+) binding. The segment at 171–179 is G2 motif; that stretch reads DILRSRNST. Residue Thr-179 coordinates Mg(2+). The G3 motif stretch occupies residues 194–203; the sequence is IRMFDVGGQR. Positions 265–272 are G4 motif; that stretch reads ILFLNKFD. Residues 324 to 329 form a G5 motif region; the sequence is TTAVDT.

The protein belongs to the G-alpha family. As to quaternary structure, g proteins are composed of 3 units; alpha, beta and gamma. Binding of the beta-gamma subunit complex (git5-git11) to the alpha subunit (gpa2) facilitates interaction with GPCR git3. Interacts with GPCR git3; the interaction is direct and leads to activation of gpa2 upon glucose stimulation. Interacts with adenylate cyclase cyr1 (via N-terminus); the interaction is direct and serves to activate adenylate cyclase and cAMP-PKA signaling, to repress sexual development and gluconeogenesis. Requires Mg(2+) as cofactor.

The protein localises to the cell membrane. Its function is as follows. Alpha subunit of the heterotrimeric guanine nucleotide-binding protein (G protein) involved in glucose-induced cAMP signaling. Binds to its cognate transmembrane receptor git3, which senses extracellular glucose, and activates cAMP-PKA signaling to repress sexual development and gluconeogenesis. This is Guanine nucleotide-binding protein alpha-2 subunit from Schizosaccharomyces pombe (strain 972 / ATCC 24843) (Fission yeast).